Reading from the N-terminus, the 113-residue chain is Large ribosomal subunit protein uL24 (113 aa).

Belongs to the universal ribosomal protein uL24 family. As to quaternary structure, part of the 50S ribosomal subunit.

One of two assembly initiator proteins, it binds directly to the 5'-end of the 23S rRNA, where it nucleates assembly of the 50S subunit. In terms of biological role, one of the proteins that surrounds the polypeptide exit tunnel on the outside of the subunit. This Chlamydia abortus (strain DSM 27085 / S26/3) (Chlamydophila abortus) protein is Large ribosomal subunit protein uL24.